Here is a 541-residue protein sequence, read N- to C-terminus: 5' exonuclease Apollo (541 aa).

Residue Lys334 forms a Glycyl lysine isopeptide (Lys-Gly) (interchain with G-Cter in SUMO2) linkage. 2 disordered regions span residues 350-375 (TQGV…KKHK) and 450-489 (IGLG…TTHL). A compositionally biased stretch (basic and acidic residues) spans 358–371 (PEEKADQVKVDRDS). The TBM signature appears at 492 to 507 (ESGGLALKYLLTPVDF).

Belongs to the DNA repair metallo-beta-lactamase (DRMBL) family. Interacts with TERF2; the interaction is direct. Interacts with MUS81, MRE11 and FANCD2. Interacts with HSPA2, HSPA8 and HSPA14. Interacts with SPAG5. Post-translationally, ubiquitinated, leading to its degradation. Interaction with TERF2 protects it from ubiquitination.

It localises to the chromosome. The protein localises to the telomere. Its subcellular location is the nucleus. It is found in the cytoplasm. The protein resides in the cytoskeleton. It localises to the microtubule organizing center. The protein localises to the centrosome. The enzyme catalyses a beta-lactam + H2O = a substituted beta-amino acid. Its function is as follows. 5'-3' exonuclease that plays a central role in telomere maintenance and protection during S-phase. Participates in the protection of telomeres against non-homologous end-joining (NHEJ)-mediated repair, thereby ensuring that telomeres do not fuse. Plays a key role in telomeric loop (T loop) formation by being recruited by TERF2 at the leading end telomeres and by processing leading-end telomeres immediately after their replication via its exonuclease activity: generates 3' single-stranded overhang at the leading end telomeres avoiding blunt leading-end telomeres that are vulnerable to end-joining reactions and expose the telomere end in a manner that activates the DNA repair pathways. Together with TERF2, required to protect telomeres from replicative damage during replication by controlling the amount of DNA topoisomerase (TOP1, TOP2A and TOP2B) needed for telomere replication during fork passage and prevent aberrant telomere topology. Also involved in response to DNA damage: plays a role in response to DNA interstrand cross-links (ICLs) by facilitating double-strand break formation. In case of spindle stress, involved in prophase checkpoint. Possesses beta-lactamase activity, catalyzing the hydrolysis of penicillin G and nitrocefin. Exhibits no activity towards other beta-lactam antibiotic classes including cephalosporins (cefotaxime) and carbapenems (imipenem). This is 5' exonuclease Apollo (Dclre1b) from Rattus norvegicus (Rat).